Reading from the N-terminus, the 219-residue chain is Small ribosomal subunit protein uS3c (219 aa).

The KH type-2 domain occupies 47–119; sequence VRKYVRTAEN…KFIISLAEVE (73 aa).

This sequence belongs to the universal ribosomal protein uS3 family. In terms of assembly, part of the 30S ribosomal subunit.

The protein localises to the plastid. Its subcellular location is the chloroplast. The sequence is that of Small ribosomal subunit protein uS3c (rps3) from Staurastrum punctulatum (Green alga).